The primary structure comprises 602 residues: MKNLSFLINRRKENTSDSNVYPGKAKSHEPSWIEMDDQTKKDGLDIVHVEFSPDTRAPSDSNKVITEIFDATEDAKEADESERGMPLATALNTYPKAAAWSLLVSTTLIMEGYDTAILGAFYALPIFQRKFGSQNDKTGEWEISASWQIGLTLCYMAGEIVGLQLTGPSVDLVGNRYTLIIALFFLAAFTFILYFCNSLGMIAVGQALCGMPWGCFQCLTVSYASEICPLALRYYLTTYSNLCWLFGQLFAAGIMKNSQKKYADSELGYKLPFALQWILPVPLALGIFFAPESPWWLVKKGRFDEARRSLRRTLSGKGPEKEILVTLEVDKIKVTIDKEKRLTSKEGSYSDCFEDKINRRRTRITCLCWAGQATCGSILIGYSTYFYEKAGVSTEMSFTFSIIQYCLGICATFLSWWASKYFGRYDLYAFGLAFQTIVFFIIGGLGCSSTHGSKMGSGSLLMAVAFFYNLGIAPVVFCLVSEMPSSRLRTKTIILARNTYNVVSIICSVLILYQLNSKKWNWGAKSGFFWGVLCFCTLIWAVVDLPETAGKTFVEINELFKLGVSARKFKSTKVDPFVVKNTPKYVSHNDPKGDIEASIAEE.

Residues 1–106 (MKNLSFLINR…AAAWSLLVST (106 aa)) are Cytoplasmic-facing. The chain crosses the membrane as a helical span at residues 107-127 (TLIMEGYDTAILGAFYALPIF). The Extracellular segment spans residues 128–142 (QRKFGSQNDKTGEWE). The chain crosses the membrane as a helical span at residues 143-163 (ISASWQIGLTLCYMAGEIVGL). Over 164–178 (QLTGPSVDLVGNRYT) the chain is Cytoplasmic. A helical membrane pass occupies residues 179 to 199 (LIIALFFLAAFTFILYFCNSL). A topological domain (extracellular) is located at residue G200. Residues 201–221 (MIAVGQALCGMPWGCFQCLTV) traverse the membrane as a helical segment. The Cytoplasmic portion of the chain corresponds to 222–234 (SYASEICPLALRY). The chain crosses the membrane as a helical span at residues 235–255 (YLTTYSNLCWLFGQLFAAGIM). Topologically, residues 256–270 (KNSQKKYADSELGYK) are extracellular. The helical transmembrane segment at 271 to 291 (LPFALQWILPVPLALGIFFAP) threads the bilayer. At 292-363 (ESPWWLVKKG…EDKINRRRTR (72 aa)) the chain is on the cytoplasmic side. The helical transmembrane segment at 364-384 (ITCLCWAGQATCGSILIGYST) threads the bilayer. Residues 385–397 (YFYEKAGVSTEMS) are Extracellular-facing. Residues 398–418 (FTFSIIQYCLGICATFLSWWA) form a helical membrane-spanning segment. At 419-426 (SKYFGRYD) the chain is on the cytoplasmic side. The chain crosses the membrane as a helical span at residues 427-447 (LYAFGLAFQTIVFFIIGGLGC). The Extracellular portion of the chain corresponds to 448 to 459 (SSTHGSKMGSGS). A helical transmembrane segment spans residues 460 to 480 (LLMAVAFFYNLGIAPVVFCLV). Residues 481–492 (SEMPSSRLRTKT) lie on the Cytoplasmic side of the membrane. A helical membrane pass occupies residues 493–513 (IILARNTYNVVSIICSVLILY). At 514–525 (QLNSKKWNWGAK) the chain is on the extracellular side. Residues 526–546 (SGFFWGVLCFCTLIWAVVDLP) form a helical membrane-spanning segment. At 547–602 (ETAGKTFVEINELFKLGVSARKFKSTKVDPFVVKNTPKYVSHNDPKGDIEASIAEE) the chain is on the cytoplasmic side.

Belongs to the major facilitator superfamily. Sugar transporter (TC 2.A.1.1) family.

It localises to the cell membrane. High-affinity uptake of maltose and maltotriose. Also transports alpha-methylglucoside, glucose and turanose but not melezitose or trehalose. In Saccharomyces cerevisiae (strain YJM789) (Baker's yeast), this protein is Alpha-glucosides permease MPH3 (MPH3).